Consider the following 112-residue polypeptide: Phosphoribosyl-ATP pyrophosphatase (112 aa).

Belongs to the PRA-PH family.

It is found in the cytoplasm. It catalyses the reaction 1-(5-phospho-beta-D-ribosyl)-ATP + H2O = 1-(5-phospho-beta-D-ribosyl)-5'-AMP + diphosphate + H(+). The protein operates within amino-acid biosynthesis; L-histidine biosynthesis; L-histidine from 5-phospho-alpha-D-ribose 1-diphosphate: step 2/9. This chain is Phosphoribosyl-ATP pyrophosphatase, found in Chromohalobacter salexigens (strain ATCC BAA-138 / DSM 3043 / CIP 106854 / NCIMB 13768 / 1H11).